The following is a 267-amino-acid chain: Undecaprenyl-diphosphatase 2 (267 aa).

Transmembrane regions (helical) follow at residues 4–24 (IYFI…FLPI), 43–63 (EEKV…CWLF), 84–104 (FAVI…LFIH), 109–129 (VLFN…IILW), 147–167 (IGFK…IPGT), 186–206 (AATE…AIYD), 219–239 (ILAI…VVNA), and 243–263 (FVAK…GLII).

This sequence belongs to the UppP family.

Its subcellular location is the cell inner membrane. The enzyme catalyses di-trans,octa-cis-undecaprenyl diphosphate + H2O = di-trans,octa-cis-undecaprenyl phosphate + phosphate + H(+). In terms of biological role, catalyzes the dephosphorylation of undecaprenyl diphosphate (UPP). Confers resistance to bacitracin. The sequence is that of Undecaprenyl-diphosphatase 2 from Shewanella oneidensis (strain ATCC 700550 / JCM 31522 / CIP 106686 / LMG 19005 / NCIMB 14063 / MR-1).